The chain runs to 473 residues: Bactericidal permeability-increasing protein (473 aa).

The N-terminal stretch at 1–18 (MVLCCWLALVALIPMTLS) is a signal peptide. Positions 19–29 (INPGVKVRLTG) are central sheet, part 1. The interval 28 to 209 (TGKGLEYGRQ…SDLNPQLKTL (182 aa)) is N-terminal barrel. An intrachain disulfide couples cysteine 153 to cysteine 192. The interval 211 to 275 (VLAKVDQYAE…INNMLYISVS (65 aa)) is central sheet, part 2. The tract at residues 225-230 (MVSSPT) is cleavage sites for elastase. Residues 276–446 (AFTINSAAFV…LAKGYPLPTL (171 aa)) form a C-terminal barrel region. N-linked (GlcNAc...) asparagine glycosylation is present at asparagine 365. The interval 453–472 (NTELQVLKDYMLIGTDVQFT) is central sheet, part 3.

Belongs to the BPI/LBP/Plunc superfamily. BPI/LBP family. In terms of assembly, monomer. Homodimer; disulfide-linked. As to expression, expressed in spleen. Lower expression in gill, head kidney, entire kidney, skin, intestine and blood and lowest expression in liver and muscle.

Its subcellular location is the secreted. Functionally, the cytotoxic action of BPI is limited to many species of Gram-negative bacteria; this specificity may be explained by a strong affinity of the very basic N-terminal half for the negatively charged lipopolysaccharides that are unique to the Gram-negative bacterial outer envelope. Exhibits neutralizing capacity towards P.aeruginosa lipopolysaccharides (LPS) and has bactericidal activity against multiple drug resistant (MDR) P.aeruginosa strains derived from people with cystic fibrosis. Has antibacterial activity against E.coli, but not against S.iniae. This Sebastes schlegelii (Korean rockfish) protein is Bactericidal permeability-increasing protein.